We begin with the raw amino-acid sequence, 146 residues long: Hemoglobin subunit beta (146 aa).

The residue at position 1 (valine 1) is an N-acetylvaline. Residues 2–146 form the Globin domain; that stretch reads HLTGEEKAAV…VANALAHKYH (145 aa). Threonine 12 carries the post-translational modification Phosphothreonine. Serine 44 carries the post-translational modification Phosphoserine. Lysine 59 bears the N6-acetyllysine mark. Histidine 63 lines the heme b pocket. An N6-acetyllysine modification is found at lysine 82. Histidine 92 provides a ligand contact to heme b. Cysteine 93 carries the S-nitrosocysteine modification. The residue at position 144 (lysine 144) is an N6-acetyllysine.

The protein belongs to the globin family. Heterotetramer of two alpha chains and two beta chains. Red blood cells.

Its function is as follows. Involved in oxygen transport from the lung to the various peripheral tissues. This chain is Hemoglobin subunit beta (HBB), found in Aotus trivirgatus (Three-striped night monkey).